The primary structure comprises 292 residues: Ribosomal protein L11 methyltransferase (292 aa).

Thr-136, Gly-159, Asp-181, and Asn-228 together coordinate S-adenosyl-L-methionine.

This sequence belongs to the methyltransferase superfamily. PrmA family.

Its subcellular location is the cytoplasm. It catalyses the reaction L-lysyl-[protein] + 3 S-adenosyl-L-methionine = N(6),N(6),N(6)-trimethyl-L-lysyl-[protein] + 3 S-adenosyl-L-homocysteine + 3 H(+). Its function is as follows. Methylates ribosomal protein L11. The chain is Ribosomal protein L11 methyltransferase from Rhizobium leguminosarum bv. trifolii (strain WSM2304).